A 326-amino-acid chain; its full sequence is MGNIWVAFTVSLAVTLIAGPLVIPVLRRLKFGQSIRSDGPSRHLQKAGTPTMGGIIFLAGTAAGGFLLIRSADGLIVLLMALGYGFIGFLDDYIKVVLKRSLGLRAREKLLGQVLLAAALAYWAVFEAGRGTGIVLPFSGFLTPGGIQMDLGWWPFLAFTVLLVVFMSNAVNLTDGLDGLAAGVSMLVALALVPVALAADRAGVAAGMAALAGGCLGFLFFNFHPAKVFMGDTGSLALGGGLCAAAVVTKSELLFLIIGGIYVLEALSVIIQVISFQTTGRRVFRMSPLHHHFELGGWSENRVVITFWALTLVFAAAGLAGLYRLV.

10 consecutive transmembrane segments (helical) span residues 4-24 (IWVA…LVIP), 49-69 (TPTM…FLLI), 74-94 (GLIV…DDYI), 109-129 (KLLG…FEAG), 151-171 (LGWW…SNAV), 179-199 (GLAA…ALAA), 203-223 (GVAA…FFNF), 228-248 (VFMG…AAVV), 254-274 (LFLI…IQVI), and 303-323 (VVIT…AGLY).

It belongs to the glycosyltransferase 4 family. MraY subfamily. Mg(2+) serves as cofactor.

It is found in the cell membrane. The catalysed reaction is UDP-N-acetyl-alpha-D-muramoyl-L-alanyl-gamma-D-glutamyl-meso-2,6-diaminopimeloyl-D-alanyl-D-alanine + di-trans,octa-cis-undecaprenyl phosphate = di-trans,octa-cis-undecaprenyl diphospho-N-acetyl-alpha-D-muramoyl-L-alanyl-D-glutamyl-meso-2,6-diaminopimeloyl-D-alanyl-D-alanine + UMP. The protein operates within cell wall biogenesis; peptidoglycan biosynthesis. Catalyzes the initial step of the lipid cycle reactions in the biosynthesis of the cell wall peptidoglycan: transfers peptidoglycan precursor phospho-MurNAc-pentapeptide from UDP-MurNAc-pentapeptide onto the lipid carrier undecaprenyl phosphate, yielding undecaprenyl-pyrophosphoryl-MurNAc-pentapeptide, known as lipid I. This is Phospho-N-acetylmuramoyl-pentapeptide-transferase from Pelotomaculum thermopropionicum (strain DSM 13744 / JCM 10971 / SI).